Here is a 339-residue protein sequence, read N- to C-terminus: Dihydroorotate dehydrogenase (quinone) (339 aa).

FMN contacts are provided by residues 62-66 (AGMDK) and Thr-86. Position 66 (Lys-66) interacts with substrate. 111-115 (NRMGF) contacts substrate. 2 residues coordinate FMN: Asn-139 and Asn-172. Asn-172 is a binding site for substrate. The active-site Nucleophile is the Ser-175. Asn-177 contributes to the substrate binding site. FMN is bound by residues Lys-217 and Thr-245. Substrate is bound at residue 246–247 (NT). Residues Gly-268, Gly-297, and 318-319 (YS) contribute to the FMN site.

This sequence belongs to the dihydroorotate dehydrogenase family. Type 2 subfamily. Monomer. FMN is required as a cofactor.

It localises to the cell membrane. It carries out the reaction (S)-dihydroorotate + a quinone = orotate + a quinol. The protein operates within pyrimidine metabolism; UMP biosynthesis via de novo pathway; orotate from (S)-dihydroorotate (quinone route): step 1/1. Functionally, catalyzes the conversion of dihydroorotate to orotate with quinone as electron acceptor. The chain is Dihydroorotate dehydrogenase (quinone) from Shewanella oneidensis (strain ATCC 700550 / JCM 31522 / CIP 106686 / LMG 19005 / NCIMB 14063 / MR-1).